Reading from the N-terminus, the 357-residue chain is Sorbitol dehydrogenase (357 aa).

A2 bears the N-acetylalanine mark. Residue C45 coordinates Zn(2+). Y51 is a substrate binding site. Zn(2+) is bound by residues H70, E71, and E156. E156 contacts substrate. S169 carries the post-translational modification Phosphoserine. NAD(+) is bound by residues I184, D204, R209, 273-275, and 297-299; these read VGM and VFR. Positions 299 and 300 each coordinate substrate.

This sequence belongs to the zinc-containing alcohol dehydrogenase family. Homotetramer; dimer of dimers. Requires Zn(2+) as cofactor. In terms of tissue distribution, expressed in liver and testis.

The protein resides in the mitochondrion membrane. It is found in the cell projection. Its subcellular location is the cilium. It localises to the flagellum. It carries out the reaction keto-D-fructose + NADH + H(+) = D-sorbitol + NAD(+). It catalyses the reaction xylitol + NAD(+) = D-xylulose + NADH + H(+). The enzyme catalyses L-iditol + NAD(+) = keto-L-sorbose + NADH + H(+). Its function is as follows. Polyol dehydrogenase that catalyzes the reversible NAD(+)-dependent oxidation of various sugar alcohols. Is active with D-sorbitol (D-glucitol) leading to the C2-oxidized product D-fructose. Is a key enzyme in the polyol pathway that interconverts glucose and fructose via sorbitol, which constitutes an important alternate route for glucose metabolism. May play a role in sperm motility by using sorbitol as an alternative energy source for sperm motility. This Rattus norvegicus (Rat) protein is Sorbitol dehydrogenase (Sord).